Here is a 510-residue protein sequence, read N- to C-terminus: Ribonuclease Y (510 aa).

The helical transmembrane segment at 2–22 (IYIIFSSIFAGFILGFLVRVF) threads the bilayer. The region spanning 198–258 (TVASVELPND…IRKELAKRTL (61 aa)) is the KH domain. Positions 324–419 (VLSHSKETAI…VQIADAISAS (96 aa)) constitute an HD domain.

It belongs to the RNase Y family.

The protein localises to the cell membrane. In terms of biological role, endoribonuclease that initiates mRNA decay. The protein is Ribonuclease Y of Borrelia garinii subsp. bavariensis (strain ATCC BAA-2496 / DSM 23469 / PBi) (Borreliella bavariensis).